Consider the following 724-residue polypeptide: NAD(+) hydrolase SARM1 (724 aa).

The transit peptide at 1 to 27 directs the protein to the mitochondrion; the sequence is MVLTLLLSAYKLCRFFAMSGPRPGAER. An ARM 1 repeat occupies 60–100; that stretch reads EVQDALERALPELQQALSALKQAGGARAVGAGLAEVFQLVE. NAD(+) is bound by residues Trp103, Arg110, 149-157, and 190-193; these read EQILVAENR and HMFK. ARM repeat units follow at residues 114–153, 155–193, 196–235, 237–280, 281–314, 315–354, and 359–402; these read QGLC…QILV, ENRD…HMFK, EETC…NCAL, GGQA…LATN, KEVE…CLVD, ASDT…AEAA, and QGKT…EEVP. SAM domains follow at residues 412-476 and 486-548; these read WKEA…LKTF and NLAD…MLHS. Phosphoserine occurs at positions 548 and 558. Residues 560–703 enclose the TIR domain; sequence DTPDVFISYR…KIIRFLQGRS (144 aa). Residues 569 to 570 and Glu599 contribute to the NAD(+) site; that span reads RR. Glu642 is an active-site residue. Residues 704–724 are disordered; it reads SRDSSAGSDTSLEGAAPMGPT.

This sequence belongs to the SARM1 family. In terms of assembly, homooctamer; forms an octameric ring via SAM domains. Interacts with TICAM1/TRIF and thereby interferes with TICAM1/TRIF function. Interacts with MAPK10/JNK3 and SDC2 (via cytoplasmic domain). Phosphorylation at Ser-548 by JNK kinases (MAPK8, MAPK9 and /or MAPK10) enhance the NAD(+) hydrolase (NADase) activity. Phosphorylation at Ser-548 and subsequent activation takes place in response to oxidative stress conditions and inhibits mitochondrial respiration. In terms of tissue distribution, predominantly expressed in brain, kidney and liver. Expressed at lower level in placenta.

Its subcellular location is the cytoplasm. It localises to the cell projection. It is found in the axon. The protein localises to the dendrite. The protein resides in the synapse. Its subcellular location is the mitochondrion. The catalysed reaction is NAD(+) + H2O = ADP-D-ribose + nicotinamide + H(+). It catalyses the reaction NAD(+) = cyclic ADP-beta-D-ribose + nicotinamide + H(+). The enzyme catalyses NADP(+) + H2O = ADP-D-ribose 2'-phosphate + nicotinamide + H(+). Autoinhibited: in the inactive state, the enzymatic TIR domain is held apart by the autoinhibiting ARM repeats. NAD(+)-binding to ARM repeats maintains an inactive state by promoting interaction between ARM repeats and the TIR domain, thereby facilitating inhibition of the enzymatic TIR domain. Following activation, possibly by nicotinamide mononucleotide (NMN), auto-inhibitory interactions are released, allowing self-association of the TIR domains and subsequent activation of the NAD(+) hydrolase (NADase) activity. Self-association of TIR domains is facilitated by the octamer of SAM domains. NAD(+) hydrolase activity is inhibited by nicotinamide. Specifically inhibited by berberine chloride and zinc chloride. NAD(+) hydrolase, which plays a key role in axonal degeneration following injury by regulating NAD(+) metabolism. Acts as a negative regulator of MYD88- and TRIF-dependent toll-like receptor signaling pathway by promoting Wallerian degeneration, an injury-induced form of programmed subcellular death which involves degeneration of an axon distal to the injury site. Wallerian degeneration is triggered by NAD(+) depletion: in response to injury, SARM1 is activated and catalyzes cleavage of NAD(+) into ADP-D-ribose (ADPR), cyclic ADPR (cADPR) and nicotinamide; NAD(+) cleavage promoting cytoskeletal degradation and axon destruction. Also able to hydrolyze NADP(+), but not other NAD(+)-related molecules. Can activate neuronal cell death in response to stress. Regulates dendritic arborization through the MAPK4-JNK pathway. Involved in innate immune response: inhibits both TICAM1/TRIF- and MYD88-dependent activation of JUN/AP-1, TRIF-dependent activation of NF-kappa-B and IRF3, and the phosphorylation of MAPK14/p38. The protein is NAD(+) hydrolase SARM1 of Homo sapiens (Human).